The primary structure comprises 321 residues: MEMLESKPLSAISMVIDSIGVDHENQNKCNCCNEQIYDRYIYRMDNRSYHENCVKCTICESPLAEKCFWKNGRIYCSQHYYKDHSIHRCAGCKKGVSPTDMVYKLKAGLVFHVECHCCSLCGRHLSPGEQILVDDTMMTVSCMSHYPPQMDDNAPGAIGSAVDIPSCSTENPIAPYPIDESFSSAFQVKKEVDAYGYNFEHYSFSDFCDDDSRMLKRRGPRTTIKQNQLDVLNEMFSNTPKPSKHARAKLALETGLSMRVIQVWFQNRRSKERRLKHLCNYLRHYEQRGLIPPPIHFRNEEMDTTDFNAFCGNFEEEDDED.

2 consecutive LIM zinc-binding domains span residues Asn-27–Ile-86 and His-87–Asp-152. The segment at residues Arg-217–Lys-276 is a DNA-binding region (homeobox).

Interacts with unc-86; the heterooligomer binds to the promoters of mec-3, mec-4 and mec-7. Expressed in the mechanosensory neurons ALML, ALMR, PLML, PLMR, AVM and PVM, and the FLPL and FLPR neurons.

The protein localises to the nucleus. Transcription factor. Specifies differentiation of the set of six touch receptor neurons (TRNs). May positively modulate expression of both its own gene and also of homeobox ARX homolog alr-1 in TRNs, forming a positive feedback loop with alr-1, thereby restricting the variability of expression of mec-3. Required to determine the identity of ALM sensory neurons, acting by interacting with unc-86, thereby preventing unc-86 cooperating with pag-3 to induce BDU-neuron specific genes. Binds cooperatively as a heterodimer with unc-86 to sites in the mec-3 gene promoter. Promotes outgrowth of lateral dendritic branches on the PVD nociceptive neurons, probably acting both directly, and upstream of zinc finger protein egl-46. In Caenorhabditis elegans, this protein is Mechanosensory protein 3 (mec-3).